We begin with the raw amino-acid sequence, 339 residues long: Dihydroorotase (339 aa).

Zn(2+)-binding residues include His12 and His14. Substrate contacts are provided by residues 14-16 (HVR) and Asn40. Positions 94, 133, 167, and 239 each coordinate Zn(2+). Lys94 is subject to N6-carboxylysine. His133 lines the substrate pocket. Asp239 is an active-site residue. Substrate is bound by residues His243 and Ala255.

The protein belongs to the metallo-dependent hydrolases superfamily. DHOase family. Class II DHOase subfamily. Homodimer. Zn(2+) is required as a cofactor.

The enzyme catalyses (S)-dihydroorotate + H2O = N-carbamoyl-L-aspartate + H(+). The protein operates within pyrimidine metabolism; UMP biosynthesis via de novo pathway; (S)-dihydroorotate from bicarbonate: step 3/3. In terms of biological role, catalyzes the reversible cyclization of carbamoyl aspartate to dihydroorotate. In Helicobacter pylori (strain G27), this protein is Dihydroorotase.